Here is a 249-residue protein sequence, read N- to C-terminus: MIKILVSNDDGVTAPGIKALSDALSTSYQVMTVGPDRNCSGASNSLTLTNPLRINTLSNGYVSVSGTPTDCVHLAIRELYTDEPDMVVSGINAGANLGDDTLYSGTVAAAMEGRFLGLPAIAISLVGSTLTHYETAAHFACKVIAGLLKKPIAQDQILNINVPDLPIEQVKGIRVTRLGARHKAEGMIRTQDPAGRDIFWLGPPGDEQDASDGTDFHAVTNGYVSVTPLTVDLTAFEQISTMQQWIDKI.

A divalent metal cation-binding residues include aspartate 9, aspartate 10, serine 40, and asparagine 92.

This sequence belongs to the SurE nucleotidase family. A divalent metal cation serves as cofactor.

The protein resides in the cytoplasm. It carries out the reaction a ribonucleoside 5'-phosphate + H2O = a ribonucleoside + phosphate. Nucleotidase that shows phosphatase activity on nucleoside 5'-monophosphates. This is 5'-nucleotidase SurE from Shewanella sediminis (strain HAW-EB3).